A 203-amino-acid polypeptide reads, in one-letter code: Nudix hydrolase 12, mitochondrial (203 aa).

In terms of domain architecture, Nudix hydrolase spans 18-166 (NFRLVSGCIP…WMQRALEEFL (149 aa)). A Nudix box motif is present at residues 66–87 (GGWEDDETVLEAASREAIEEAG). The Mg(2+) site is built by glutamate 81 and glutamate 85.

Belongs to the Nudix hydrolase family. The cofactor is Mg(2+). Mn(2+) serves as cofactor. In terms of tissue distribution, expressed in roots, leaves, stems and inflorescences.

The protein resides in the mitochondrion. In terms of biological role, probably mediates the hydrolysis of some nucleoside diphosphate derivatives. The sequence is that of Nudix hydrolase 12, mitochondrial (NUDT12) from Arabidopsis thaliana (Mouse-ear cress).